Here is a 1044-residue protein sequence, read N- to C-terminus: Unconventional myosin-Ic (1044 aa).

The 685-residue stretch at 28 to 712 (GVQDFVLLEN…TLFATEDSLE (685 aa)) folds into the Myosin motor domain. Residues N69, Y77, 120–129 (SGESGAGKTE), and 173–177 (NDNSS) contribute to the ATP site. K364 is modified (N6-methyllysine). The residue at position 389 (S389) is a Phosphoserine. Residue K467 is modified to N6-acetyllysine. S517 carries the phosphoserine modification. The tract at residues 589-611 (LLQLVEILRSKEPAYIRCIKPND) is actin-binding. 2 IQ domains span residues 715-744 (RQSL…SAIC) and 738-767 (VKRS…AAQT). Residues S845 and S1022 each carry the phosphoserine modification. The TH1 domain maps to 866 to 1040 (KDNYPQSVPR…NGHLAVVAPR (175 aa)).

The protein belongs to the TRAFAC class myosin-kinesin ATPase superfamily. Myosin family. In terms of assembly, interacts (via its IQ motifs) with CABP1 and CIB1; the interaction with CABP1 and CIB1 is calcium-dependent. Interacts (via tail domain) with PLEKHB1 (via PH domain); the interaction is not affected by the presence or absence of calcium and CALM. Interacts with POLR1A. Interacts with POLR2A. Component of the B-WICH complex, at least composed of SMARCA5/SNF2H, BAZ1B/WSTF, SF3B1, DEK, MYO1C, ERCC6, MYBBP1A and DDX21. Interacts (via its IQ motifs) with CALM; this precludes interaction with YWHAB. Interacts with YWHAB; this precludes interaction with CALM. Interacts with RPS6. Interacts with actin. Interacts with LLPH. Interacts with GLUT4. Interacts (via its IQ motifs) with SH3BGRL3; the interaction is dependent on calcium and takes place at membrane ruffles.

It localises to the cytoplasm. It is found in the nucleus. The protein resides in the cell cortex. The protein localises to the cell projection. Its subcellular location is the stereocilium membrane. It localises to the cytoplasmic vesicle. It is found in the ruffle membrane. In terms of biological role, myosins are actin-based motor molecules with ATPase activity. Unconventional myosins serve in intracellular movements. Their highly divergent tails are presumed to bind to membranous compartments, which would be moved relative to actin filaments. Involved in glucose transporter recycling in response to insulin by regulating movement of intracellular GLUT4-containing vesicles to the plasma membrane. Component of the hair cell's (the sensory cells of the inner ear) adaptation-motor complex. Acts as a mediator of adaptation of mechanoelectrical transduction in stereocilia of vestibular hair cells. Binds phosphoinositides and links the actin cytoskeleton to cellular membranes. The polypeptide is Unconventional myosin-Ic (Myo1c) (Rattus norvegicus (Rat)).